A 363-amino-acid polypeptide reads, in one-letter code: DNA replication and repair protein RecF (363 aa).

30–37 (GPNGSGKT) contacts ATP.

The protein belongs to the RecF family.

The protein resides in the cytoplasm. Functionally, the RecF protein is involved in DNA metabolism; it is required for DNA replication and normal SOS inducibility. RecF binds preferentially to single-stranded, linear DNA. It also seems to bind ATP. In Chlorobium phaeobacteroides (strain BS1), this protein is DNA replication and repair protein RecF.